A 364-amino-acid polypeptide reads, in one-letter code: CCA-adding enzyme (364 aa).

Positions 19 and 22 each coordinate ATP. Residues Gly-19 and Arg-22 each coordinate CTP. The Mg(2+) site is built by Asp-32 and Asp-34. Residues Arg-102, Arg-148, and Arg-151 each coordinate ATP. Arg-102, Arg-148, and Arg-151 together coordinate CTP.

Belongs to the tRNA nucleotidyltransferase/poly(A) polymerase family. Bacterial CCA-adding enzyme type 2 subfamily. It depends on Mg(2+) as a cofactor.

It catalyses the reaction a tRNA precursor + 2 CTP + ATP = a tRNA with a 3' CCA end + 3 diphosphate. It carries out the reaction a tRNA with a 3' CCA end + 2 CTP + ATP = a tRNA with a 3' CCACCA end + 3 diphosphate. Its function is as follows. Catalyzes the addition and repair of the essential 3'-terminal CCA sequence in tRNAs without using a nucleic acid template. Adds these three nucleotides in the order of C, C, and A to the tRNA nucleotide-73, using CTP and ATP as substrates and producing inorganic pyrophosphate. tRNA 3'-terminal CCA addition is required both for tRNA processing and repair. Also involved in tRNA surveillance by mediating tandem CCA addition to generate a CCACCA at the 3' terminus of unstable tRNAs. While stable tRNAs receive only 3'-terminal CCA, unstable tRNAs are marked with CCACCA and rapidly degraded. This is CCA-adding enzyme from Bordetella pertussis (strain Tohama I / ATCC BAA-589 / NCTC 13251).